A 198-amino-acid polypeptide reads, in one-letter code: Recombination protein RecR (198 aa).

The C4-type zinc-finger motif lies at 57 to 72 (CAMCNTFTEHEVCETC). The Toprim domain occupies 80–175 (ALLCVVETPG…KVSRLARGVP (96 aa)).

This sequence belongs to the RecR family.

Its function is as follows. May play a role in DNA repair. It seems to be involved in an RecBC-independent recombinational process of DNA repair. It may act with RecF and RecO. The protein is Recombination protein RecR of Janthinobacterium sp. (strain Marseille) (Minibacterium massiliensis).